We begin with the raw amino-acid sequence, 229 residues long: Potassium/proton antiporter CemA (229 aa).

2 helical membrane passes run F7–V27 and I107–G127.

This sequence belongs to the CemA family.

Its subcellular location is the plastid. The protein localises to the chloroplast inner membrane. The enzyme catalyses K(+)(in) + H(+)(out) = K(+)(out) + H(+)(in). In terms of biological role, contributes to K(+)/H(+) antiport activity by supporting proton efflux to control proton extrusion and homeostasis in chloroplasts in a light-dependent manner to modulate photosynthesis. Prevents excessive induction of non-photochemical quenching (NPQ) under continuous-light conditions. Indirectly promotes efficient inorganic carbon uptake into chloroplasts. The chain is Potassium/proton antiporter CemA from Solanum tuberosum (Potato).